Reading from the N-terminus, the 534-residue chain is Phosphoenolpyruvate carboxykinase (ATP) (534 aa).

Residues Arg-58, Tyr-194, and Lys-200 each coordinate substrate. ATP-binding positions include Lys-200, His-219, and 235-243 (GLSGTGKTT). Residues Lys-200 and His-219 each coordinate Mn(2+). Asp-256 serves as a coordination point for Mn(2+). Glu-284, Arg-322, and Thr-449 together coordinate ATP. Arg-322 serves as a coordination point for substrate.

Belongs to the phosphoenolpyruvate carboxykinase (ATP) family. Requires Mn(2+) as cofactor.

The protein localises to the cytoplasm. It carries out the reaction oxaloacetate + ATP = phosphoenolpyruvate + ADP + CO2. Its pathway is carbohydrate biosynthesis; gluconeogenesis. In terms of biological role, involved in the gluconeogenesis. Catalyzes the conversion of oxaloacetate (OAA) to phosphoenolpyruvate (PEP) through direct phosphoryl transfer between the nucleoside triphosphate and OAA. The chain is Phosphoenolpyruvate carboxykinase (ATP) from Novosphingobium aromaticivorans (strain ATCC 700278 / DSM 12444 / CCUG 56034 / CIP 105152 / NBRC 16084 / F199).